A 58-amino-acid polypeptide reads, in one-letter code: uncharacterized protein (58 aa).

This is an uncharacterized protein from Archaeoglobus fulgidus (strain ATCC 49558 / DSM 4304 / JCM 9628 / NBRC 100126 / VC-16).